We begin with the raw amino-acid sequence, 245 residues long: 8-amino-3,8-dideoxy-manno-octulosonate cytidylyltransferase (245 aa).

The protein belongs to the KdsB family.

Its subcellular location is the cytoplasm. The enzyme catalyses 8-amino-3,8-dideoxy-alpha-D-manno-octulosonate + CTP = CMP-8-amino-3,8-dideoxy-alpha-D-manno-oct-2-ulosonate + diphosphate. The protein operates within bacterial outer membrane biogenesis; lipopolysaccharide biosynthesis. Activates KDO8N (a required 8-carbon sugar) for incorporation into bacterial lipopolysaccharide in the Shewanella genus. In Shewanella woodyi (strain ATCC 51908 / MS32), this protein is 8-amino-3,8-dideoxy-manno-octulosonate cytidylyltransferase.